Here is a 409-residue protein sequence, read N- to C-terminus: Peptidase T (409 aa).

His-78 contacts Zn(2+). Asp-80 is an active-site residue. Residue Asp-140 participates in Zn(2+) binding. The active-site Proton acceptor is the Glu-174. 3 residues coordinate Zn(2+): Glu-175, Asp-197, and His-379.

Belongs to the peptidase M20B family. It depends on Zn(2+) as a cofactor.

The protein resides in the cytoplasm. It carries out the reaction Release of the N-terminal residue from a tripeptide.. Its function is as follows. Cleaves the N-terminal amino acid of tripeptides. In Aliivibrio fischeri (strain ATCC 700601 / ES114) (Vibrio fischeri), this protein is Peptidase T.